The primary structure comprises 349 residues: GMP reductase (349 aa).

Residue 108 to 131 (LDFFKIKKIFSLSSELKYICIDVA) participates in NADP(+) binding. Residues G181 and G183 each contribute to the K(+) site. C186 (thioimidate intermediate) is an active-site residue. Position 216 to 239 (216 to 239 (IISDGGCTVSGDIAKAFGGGADFV)) interacts with NADP(+).

Belongs to the IMPDH/GMPR family. GuaC type 1 subfamily. As to quaternary structure, homotetramer.

The catalysed reaction is IMP + NH4(+) + NADP(+) = GMP + NADPH + 2 H(+). Functionally, catalyzes the irreversible NADPH-dependent deamination of GMP to IMP. It functions in the conversion of nucleobase, nucleoside and nucleotide derivatives of G to A nucleotides, and in maintaining the intracellular balance of A and G nucleotides. This is GMP reductase from Buchnera aphidicola subsp. Schizaphis graminum (strain Sg).